The primary structure comprises 279 residues: Complement component 1 Q subcomponent-binding protein, mitochondrial (279 aa).

The N-terminal 71 residues, 1 to 71, are a transit peptide targeting the mitochondrion; the sequence is MLPLLRCVPR…PVPCACGCGA (71 aa). Positions 74–91 are C1q binding; that stretch reads TEGDKAFVEFLTDEIKEE. An N6-acetyllysine mark is found at Lys-89 and Lys-92. Residues 134-162 form a disordered region; sequence NNSIPPTFDGEEEPSQGQKAEEQEPELTS. The interval 166-210 is interaction with MAVS; sequence FVVEVTKTDGKKTLVLDCHYPEDEIGHEDEAESDIFSIKEVSFQT. Phosphotyrosine is present on Tyr-185. Ser-198 and Ser-202 each carry phosphoserine. Thr-211 is subject to Phosphothreonine.

The protein belongs to the MAM33 family. As to quaternary structure, homotrimer; three monomers form a donut-shaped structure with an unusually asymmetric charge distribution on the surface. Interacts with CDK13, HRK, VTN, NFYB, ADRA1B, FOXC1, DDX21, DDX50, NCL, SRSF1 and SRSF9. Interacts with CD93; the association may represent a cell surface C1q receptor. Interacts with KRT1; the association represents a cell surface kininogen receptor. Interacts with CD209; the interaction is indicative for a C1q:C1QBP:CD209 signaling complex. Interacts with FBL and RRP1; the respective interactions with C1QBP are competitive. Probably associates with the mitoribosome. Interacts with MAVS; the interaction occurs upon viral transfection. Interacts with PPIF. Interacts with U2AF1L4. Interacts with PLEKHN1. Interacts with VGF-derived peptide TLQP-21. Interacts with MRE11 and RAD50; forming the MRC (MRE11-RAD50-C1QBP) complex that inhibits the activity of MRE11. Ubiquitous.

The protein localises to the mitochondrion matrix. Its subcellular location is the nucleus. It is found in the cell membrane. It localises to the secreted. The protein resides in the cytoplasm. The protein localises to the nucleolus. In terms of biological role, multifunctional and multicompartmental protein involved in inflammation and infection processes, ribosome biogenesis, protein synthesis in mitochondria, regulation of apoptosis, transcriptional regulation and pre-mRNA splicing. At the cell surface is thought to act as an endothelial receptor for plasma proteins of the complement and kallikrein-kinin cascades. Putative receptor for C1q; specifically binds to the globular 'heads' of C1q thus inhibiting C1; may perform the receptor function through a complex with C1qR/CD93. In complex with cytokeratin-1/KRT1 is a high affinity receptor for kininogen-1/HMWK. Can also bind other plasma proteins, such as coagulation factor XII leading to its autoactivation. May function to bind initially fluid kininogen-1 to the cell membrane. The secreted form may enhance both extrinsic and intrinsic coagulation pathways. It is postulated that the cell surface form requires docking with transmembrane proteins for downstream signaling which might be specific for a cell-type or response. By acting as C1q receptor is involved in chemotaxis of immature dendritic cells and neutrophils and is proposed to signal through CD209/DC-SIGN on immature dendritic cells, through integrin alpha-4/beta-1 during trophoblast invasion of the decidua, and through integrin beta-1 during endothelial cell adhesion and spreading. Signaling involved in inhibition of innate immune response is implicating the PI3K-AKT/PKB pathway. Required for protein synthesis in mitochondria. In mitochondrial translation may be involved in formation of functional 55S mitoribosomes; the function seems to involve its RNA-binding activity. Acts as a RNA modification reader, which specifically recognizes and binds mitochondrial RNAs modified by C5-methylcytosine (m5C) in response to stress, and promotes recruitment of the mitochondrial degradosome complex, leading to their degradation. May be involved in the nucleolar ribosome maturation process; the function may involve the exchange of FBL for RRP1 in the association with pre-ribosome particles. Involved in regulation of RNA splicing by inhibiting the RNA-binding capacity of SRSF1 and its phosphorylation. Is required for the nuclear translocation of splicing factor U2AF1L4. Involved in regulation of CDKN2A- and HRK-mediated apoptosis. Stabilizes mitochondrial CDKN2A isoform smARF. May be involved in regulation of FOXC1 transcriptional activity and NFY/CCAAT-binding factor complex-mediated transcription. May play a role in antibacterial defense as it can bind to cell surface hyaluronan and inhibit Streptococcus pneumoniae hyaluronate lyase. May be involved in modulation of the immune response; ligation by HCV core protein is resulting in suppression of interleukin-12 production in monocyte-derived dendritic cells. Involved in regulation of antiviral response by inhibiting RIGI- and IFIH1-mediated signaling pathways probably involving its association with MAVS after viral infection. Acts as a regulator of DNA repair via homologous recombination by inhibiting the activity of MRE11: interacts with unphosphorylated MRE11 and RAD50 in absence of DNA damage, preventing formation and activity of the MRN complex. Following DNA damage, dissociates from phosphorylated MRE11, allowing formation of the MRN complex. The chain is Complement component 1 Q subcomponent-binding protein, mitochondrial (C1qbp) from Rattus norvegicus (Rat).